An 85-amino-acid polypeptide reads, in one-letter code: Small ribosomal subunit protein uS17 (85 aa).

Belongs to the universal ribosomal protein uS17 family. As to quaternary structure, part of the 30S ribosomal subunit.

Its function is as follows. One of the primary rRNA binding proteins, it binds specifically to the 5'-end of 16S ribosomal RNA. This is Small ribosomal subunit protein uS17 from Rhodospirillum centenum (strain ATCC 51521 / SW).